The following is a 445-amino-acid chain: GTPase Der (445 aa).

2 consecutive EngA-type G domains span residues 3-167 and 180-353; these read PVIA…YAGQ and IKIA…AAAM. Residues 9–16, 56–60, 119–122, 186–193, 233–237, and 298–301 each bind GTP; these read GRPNVGKS, DTGGF, NKAE, DTAGL, and NKWD. The 85-residue stretch at 354-438 folds into the KH-like domain; the sequence is AKLPTPKLTR…PLRIEFRSSN (85 aa).

It belongs to the TRAFAC class TrmE-Era-EngA-EngB-Septin-like GTPase superfamily. EngA (Der) GTPase family. As to quaternary structure, associates with the 50S ribosomal subunit.

In terms of biological role, GTPase that plays an essential role in the late steps of ribosome biogenesis. This Burkholderia vietnamiensis (strain G4 / LMG 22486) (Burkholderia cepacia (strain R1808)) protein is GTPase Der.